The chain runs to 364 residues: Glycosyltransferase 8 domain-containing protein 1 (364 aa).

Residues 1-5 (MRRVH) lie on the Cytoplasmic side of the membrane. A helical; Signal-anchor for type II membrane protein transmembrane segment spans residues 6–26 (ITVILLAAVIFLLVLHHNILG). Residues 27–364 (LSDILKRQNS…QFSLIRRHAE (338 aa)) are Lumenal-facing. N-linked (GlcNAc...) asparagine glycans are attached at residues Asn-102, Asn-247, and Asn-255.

Belongs to the glycosyltransferase 8 family.

It is found in the membrane. This is Glycosyltransferase 8 domain-containing protein 1 (glt8d1) from Xenopus laevis (African clawed frog).